The primary structure comprises 379 residues: Chaperone protein DnaJ (379 aa).

The J domain occupies 5–69; sequence EYYERLGVDK…QKRAAYDQYG (65 aa). The CR-type zinc-finger motif lies at 141–223; it reads GVEKQVKYNR…CHGSGHEKVA (83 aa). Residues Cys154, Cys157, Cys171, Cys174, Cys197, Cys200, Cys211, and Cys214 each contribute to the Zn(2+) site. CXXCXGXG motif repeat units follow at residues 154–161, 171–178, 197–204, and 211–218; these read CHTCDGSG, CHKCGGRG, CDVCHGTG, and CTTCHGSG.

The protein belongs to the DnaJ family. As to quaternary structure, homodimer. Zn(2+) is required as a cofactor.

Its subcellular location is the cytoplasm. In terms of biological role, participates actively in the response to hyperosmotic and heat shock by preventing the aggregation of stress-denatured proteins and by disaggregating proteins, also in an autonomous, DnaK-independent fashion. Unfolded proteins bind initially to DnaJ; upon interaction with the DnaJ-bound protein, DnaK hydrolyzes its bound ATP, resulting in the formation of a stable complex. GrpE releases ADP from DnaK; ATP binding to DnaK triggers the release of the substrate protein, thus completing the reaction cycle. Several rounds of ATP-dependent interactions between DnaJ, DnaK and GrpE are required for fully efficient folding. Also involved, together with DnaK and GrpE, in the DNA replication of plasmids through activation of initiation proteins. The protein is Chaperone protein DnaJ of Lactococcus lactis subsp. cremoris (strain SK11).